Reading from the N-terminus, the 463-residue chain is Competence protein ComFA (463 aa).

Cys60, Cys63, Cys84, and Cys87 together coordinate Zn(2+). Residues 133–285 (IEAISKKEEL…LNGQLHSVRI (153 aa)) enclose the Helicase ATP-binding domain. Position 146-153 (146-153 (AVCGAGKT)) interacts with ATP. The DEAD box signature appears at 233 to 236 (DEVD). Residues 317–463 (AVKRWIEFHV…ELAAKVECTD (147 aa)) form the Helicase C-terminal domain.

This sequence belongs to the DEAD box helicase family. Monomer and dimer in solution. Interacts with DprA and ComFC; ComFA-ComFC form rings about 150 Angstroms in diameter with apparent 6-fold symmetry. Requires Zn(2+) as cofactor.

Its subcellular location is the cytoplasm. Functionally, involved in transformation (genetic competence for DNA uptake). Required for DNA uptake but not for DNA binding to cells. DNA uptake is energy dependent, this protein may provide the driving force for DNA uptake. Does not have helicase activity, translocates on single-stranded (ss)DNA in a 5'-3' direction in an ATP-dependent manner, but does not unwind double-stranded (ds)DNA. ATP hydrolysis causes the release of ssDNA from ComFA. A ssDNA-stimulated ATPase; dsDNA does not stimulate ATPase. ATP hydrolysis causes the release of ssDNA from ComFA. Binds ssDNA but only very poorly to dsDNA in the absence of ATP. Binding to ssDNA does not require free DNA ends. The polypeptide is Competence protein ComFA (Bacillus subtilis (strain 168)).